Reading from the N-terminus, the 458-residue chain is ATP synthase subunit beta (458 aa).

148 to 155 contacts ATP; the sequence is GGAGVGKT.

The protein belongs to the ATPase alpha/beta chains family. As to quaternary structure, F-type ATPases have 2 components, CF(1) - the catalytic core - and CF(0) - the membrane proton channel. CF(1) has five subunits: alpha(3), beta(3), gamma(1), delta(1), epsilon(1). CF(0) has three main subunits: a(1), b(2) and c(9-12). The alpha and beta chains form an alternating ring which encloses part of the gamma chain. CF(1) is attached to CF(0) by a central stalk formed by the gamma and epsilon chains, while a peripheral stalk is formed by the delta and b chains.

The protein resides in the cell inner membrane. The enzyme catalyses ATP + H2O + 4 H(+)(in) = ADP + phosphate + 5 H(+)(out). Produces ATP from ADP in the presence of a proton gradient across the membrane. The catalytic sites are hosted primarily by the beta subunits. This is ATP synthase subunit beta from Francisella philomiragia subsp. philomiragia (strain ATCC 25017 / CCUG 19701 / FSC 153 / O#319-036).